A 95-amino-acid chain; its full sequence is Small ribosomal subunit protein bS6 (95 aa).

This sequence belongs to the bacterial ribosomal protein bS6 family.

In terms of biological role, binds together with bS18 to 16S ribosomal RNA. The polypeptide is Small ribosomal subunit protein bS6 (Corynebacterium glutamicum (strain ATCC 13032 / DSM 20300 / JCM 1318 / BCRC 11384 / CCUG 27702 / LMG 3730 / NBRC 12168 / NCIMB 10025 / NRRL B-2784 / 534)).